The following is a 288-amino-acid chain: Elongation factor Ts (288 aa).

An involved in Mg(2+) ion dislocation from EF-Tu region spans residues 82-85 (TDFV).

Belongs to the EF-Ts family.

It localises to the cytoplasm. Functionally, associates with the EF-Tu.GDP complex and induces the exchange of GDP to GTP. It remains bound to the aminoacyl-tRNA.EF-Tu.GTP complex up to the GTP hydrolysis stage on the ribosome. This is Elongation factor Ts from Prosthecochloris aestuarii (strain DSM 271 / SK 413).